The following is a 408-amino-acid chain: Sprouty-related, EVH1 domain-containing protein 3 (408 aa).

The WH1 domain occupies methionine 1 to leucine 113. The tract at residues leucine 118–proline 226 is disordered. Residues proline 120–serine 130 show a composition bias toward low complexity. In terms of domain architecture, KBD spans leucine 192–threonine 242. Arginine 238 bears the Asymmetric dimethylarginine mark. Residue arginine 246 is modified to Omega-N-methylarginine. Positions leucine 256 to serine 286 are disordered. Over residues proline 265–alanine 281 the composition is skewed to pro residues. An SPR domain is found at arginine 294–glutamate 405.

As to quaternary structure, interacts with palmitoyltransferase ZDHHC17/HIP14; the interaction leads to palmitoylation of SPRED3. Phosphorylated on tyrosine. Post-translationally, palmitoylated by ZDHHC17/HIP14. In terms of processing, ubiquitinated. As to expression, brain specific.

It localises to the cell membrane. Its function is as follows. Tyrosine kinase substrate that inhibits growth-factor-mediated activation of MAP kinase. Inhibits fibroblast growth factor (FGF)-induced retinal lens fiber differentiation, probably by inhibiting FGF-mediated phosphorylation of ERK1/2. Inhibits TGFB-induced epithelial-to-mesenchymal transition in lens epithelial cells. This is Sprouty-related, EVH1 domain-containing protein 3 (Spred3) from Mus musculus (Mouse).